The sequence spans 600 residues: Proline--tRNA ligase (600 aa).

This sequence belongs to the class-II aminoacyl-tRNA synthetase family. ProS type 1 subfamily. Homodimer.

It is found in the cytoplasm. The catalysed reaction is tRNA(Pro) + L-proline + ATP = L-prolyl-tRNA(Pro) + AMP + diphosphate. Catalyzes the attachment of proline to tRNA(Pro) in a two-step reaction: proline is first activated by ATP to form Pro-AMP and then transferred to the acceptor end of tRNA(Pro). As ProRS can inadvertently accommodate and process non-cognate amino acids such as alanine and cysteine, to avoid such errors it has two additional distinct editing activities against alanine. One activity is designated as 'pretransfer' editing and involves the tRNA(Pro)-independent hydrolysis of activated Ala-AMP. The other activity is designated 'posttransfer' editing and involves deacylation of mischarged Ala-tRNA(Pro). The misacylated Cys-tRNA(Pro) is not edited by ProRS. This is Proline--tRNA ligase from Prochlorococcus marinus (strain MIT 9312).